The sequence spans 69 residues: Pleurain-A1 (69 aa).

The N-terminal stretch at 1-18 (MFTLKKTLLLLFFLGTIS) is a signal peptide. Residues 19-43 (ISLCKQERDADEDDGRKMTEEEVKR) constitute a propeptide that is removed on maturation. An intrachain disulfide couples C63 to C69.

In terms of tissue distribution, expressed by the skin glands.

The protein localises to the secreted. In terms of biological role, antimicrobial peptide. Has activity against the Gram-positive bacterium S.aureus ATCC2592 (MIC=15 ug/ml), the Gram-negative bacteria E.coli ATCC25922 (MIC=60 ug/ml), B.dysenteriae (MIC=120 ug/ml), H.pylori NTCT11637 (MIC=30 ug/ml), and the fungus C.albicans ATCC2002 (MIC=30 ug/ml). Has little hemolytic activity on rabbit red blood cells. The sequence is that of Pleurain-A1 from Nidirana pleuraden (Yunnan pond frog).